A 205-amino-acid polypeptide reads, in one-letter code: MAASTASQRPLKGILKDNTSTTSSMVASAEHPRGSVHEQLSKKSQKWDEMNILATYRPADKDYGLMKIDEPSTPYHSTMGDDEDACSDTETTEAMATDSLAKNLAAAEGLEPKYQVQEQESSGEEDSDLSPEEREKKRQFEMRRTLHYNEGLNIKLARQLISKDLHDDDKVEEMLETAHGESMNTEESNQGSTASDQQQNKSRSS.

4 disordered regions span residues 1-44 (MAAS…SKKS), 64-92 (GLMKIDEPSTPYHSTMGDDEDACSDTETT), 107-148 (AEGL…TLHY), and 171-205 (VEEMLETAHGESMNTEESNQGSTASDQQQNKSRSS). Required for binding PPP1CC stretches follow at residues 12-17 (KGILKD) and 43-55 (KSQKWDEMNILAT). A compositionally biased stretch (polar residues) spans 17–26 (DNTSTTSSMV). The segment covering 30 to 44 (EHPRGSVHEQLSKKS) has biased composition (basic and acidic residues). Residue T73 is modified to Phosphothreonine; by GSK3. Composition is skewed to acidic residues over residues 80–91 (GDDEDACSDTET) and 121–130 (SSGEEDSDLS). A Phosphoserine; by CK2 modification is found at S87. Basic and acidic residues predominate over residues 131-144 (PEEREKKRQFEMRR). The tract at residues 147 to 150 (HYNE) is required for binding PPP1CC catalytic center, displacing metal ions and inhibition of PPP1CC catalytic activity. A compositionally biased stretch (polar residues) spans 182-205 (SMNTEESNQGSTASDQQQNKSRSS).

Belongs to the protein phosphatase inhibitor 2 family.

Inhibitor of protein-phosphatase 1. The polypeptide is Putative protein phosphatase inhibitor 2-like protein 1 (PPP1R2P1) (Homo sapiens (Human)).